The sequence spans 303 residues: Mitochondrial carrier homolog 2 (303 aa).

Alanine 2 is modified (N-acetylalanine). Over 2-15 the chain is Mitochondrial intermembrane; sequence ADAASQVLLGSGLT. Solcar repeat units lie at residues 2–98 and 118–206; these read ADAA…YQEC and DRVI…VNTY. Residues 16–36 traverse the membrane as a helical segment; the sequence is ILSQPLMYVKVLIQVGYEPLA. At 37–77 the chain is on the cytoplasmic side; the sequence is PTVGRNIFGRQVCQLPGLFCYAQHIASIDGKRGLFTGLTPR. Residues 78–92 traverse the membrane as a helical segment; that stretch reads LCSGVLGTVVHGKVL. Residues 93 to 135 lie on the Mitochondrial intermembrane side of the membrane; it reads QHYQECDKAEESGSGNVQKEVSSSFDRVIKETTREMMARSAAT. A helical transmembrane segment spans residues 136 to 156; it reads LITHPFHVITLRSMVQFIGRE. Over 157–180 the chain is Cytoplasmic; the sequence is SKYCGLCDSIATIYREEGILGFFA. Residues 181 to 199 form a helical membrane-spanning segment; the sequence is GLIPRLLGDIISLWLCNSL. Topologically, residues 200-231 are mitochondrial intermembrane; that stretch reads AYLVNTYALDSGVSTMNEMKSYSQAVTGFFAS. Residues 232–252 form a helical membrane-spanning segment; the sequence is MLTYPFVLVSNLMAVNNCGLA. At 253 to 280 the chain is on the cytoplasmic side; that stretch reads GGCPPYAPIYSSWIDCWCMLQKEGNMSR. Residues 281–303 traverse the membrane as a helical segment; sequence GNSLFFRKVPFGKTYCCDLRMLI.

This sequence belongs to the mitochondrial carrier (TC 2.A.29) family. Interacts with p15BID.

It is found in the mitochondrion outer membrane. In terms of biological role, protein insertase that mediates insertion of transmembrane proteins into the mitochondrial outer membrane. Catalyzes insertion of proteins with alpha-helical transmembrane regions, such as signal-anchored, tail-anchored and multi-pass membrane proteins. Does not mediate insertion of beta-barrel transmembrane proteins. Also acts as a receptor for the truncated form of pro-apoptotic BH3-interacting domain death agonist (p15 BID) and has therefore a critical function in apoptosis. Regulates the quiescence/cycling of hematopoietic stem cells (HSCs). Acts as a regulator of mitochondrial fusion, essential for the naive-to-primed interconversion of embryonic stem cells (ESCs). Acts as a regulator of lipid homeostasis and has a regulatory role in adipocyte differentiation and biology. In Bos taurus (Bovine), this protein is Mitochondrial carrier homolog 2 (MTCH2).